The following is a 34-amino-acid chain: Sperm protein EM1 (34 aa).

Positions 1 to 17 (AGSKSRSRSRSRSRSKS) are enriched in basic residues. A disordered region spans residues 1–34 (AGSKSRSRSRSRSRSKSPAKSASPKSAASPRASR). 7 repeat units span residues 3 to 4 (SK), 5 to 6 (SR), 7 to 8 (SR), 9 to 10 (SR), 11 to 12 (SR), 13 to 14 (SR), and 15 to 16 (SK). The interval 3–16 (SKSRSRSRSRSRSK) is 7 X 2 AA tandem repeats of S-[KR]. Residues 18–34 (PAKSASPKSAASPRASR) show a composition bias toward low complexity.

In terms of tissue distribution, sperm.

Its subcellular location is the nucleus. This Ensis minor (Razor shell) protein is Sperm protein EM1.